Reading from the N-terminus, the 181-residue chain is ATP-dependent protease subunit HslV (181 aa).

Threonine 9 is a catalytic residue. Na(+)-binding residues include alanine 166, cysteine 169, and threonine 172.

It belongs to the peptidase T1B family. HslV subfamily. As to quaternary structure, a double ring-shaped homohexamer of HslV is capped on each side by a ring-shaped HslU homohexamer. The assembly of the HslU/HslV complex is dependent on binding of ATP.

It is found in the cytoplasm. It carries out the reaction ATP-dependent cleavage of peptide bonds with broad specificity.. Its activity is regulated as follows. Allosterically activated by HslU binding. In terms of biological role, protease subunit of a proteasome-like degradation complex believed to be a general protein degrading machinery. This is ATP-dependent protease subunit HslV from Staphylococcus aureus (strain JH1).